The chain runs to 329 residues: Endonuclease 8-like 2 (329 aa).

Pro-2 (schiff-base intermediate with DNA) is an active-site residue. The active-site Proton donor is the Glu-3. Residue Lys-50 is the Proton donor; for beta-elimination activity of the active site. Lys-50 carries the N6-acetyllysine modification. Residue Ser-68 is modified to Phosphoserine. A disordered region spans residues 88 to 112; the sequence is GPSAQEPSAGPSGSGEPVPSRSAET. N6-acetyllysine is present on Lys-150. Asn-227 contacts DNA. Residues 280-316 form an FPG-type zinc finger; it reads QIYQKEQCPSGHQVMKETFGPPDGLQRLTWWCPQCQP. Arg-306 (proton donor; for delta-elimination activity) is an active-site residue.

It belongs to the FPG family. In terms of assembly, binds EP300.

The protein localises to the nucleus. The enzyme catalyses 2'-deoxyribonucleotide-(2'-deoxyribose 5'-phosphate)-2'-deoxyribonucleotide-DNA = a 3'-end 2'-deoxyribonucleotide-(2,3-dehydro-2,3-deoxyribose 5'-phosphate)-DNA + a 5'-end 5'-phospho-2'-deoxyribonucleoside-DNA + H(+). Acetylation of Lys-50 leads to loss of DNA nicking activity. In terms of biological role, involved in base excision repair of DNA damaged by oxidation or by mutagenic agents. Has DNA glycosylase activity towards 5-hydroxyuracil and other oxidized derivatives of cytosine with a preference for mismatched double-stranded DNA (DNA bubbles). Has low or no DNA glycosylase activity towards thymine glycol, 2-hydroxyadenine, hypoxanthine and 8-oxoguanine. Has AP (apurinic/apyrimidinic) lyase activity and introduces nicks in the DNA strand. Cleaves the DNA backbone by beta-delta elimination to generate a single-strand break at the site of the removed base with both 3'- and 5'-phosphates. In Mus musculus (Mouse), this protein is Endonuclease 8-like 2 (Neil2).